Consider the following 389-residue polypeptide: MVIAAAVIVPLGLLFFISGLAVNLFQAVCYVLIRPLSKNTYRKINRVVAETLWLELVWIVDWWAGVKIQVFADNETFNRMGKEHALVVCNHRSDIDWLVGWILAQRSGCLGSALAVMKKSSKFLPVIGWSMWFSEYLFLERNWAKDESTLKSGLQRLSDFPRPFWLALFVEGTRFTEAKLKAAQEYAASSELPIPRNVLIPRTKGFVSAVSNMRSFVPAIYDMTVTIPKTSPPPTMLRLFKGQPSVVHVHIKCHSMKDLPESDDAIAQWCRDQFVAKDALLDKHIAADTFPGQQEQNIGRPIKSLAVVLSWACVLTLGAIKFLHWAQLFSSWKGITISALGLGIITLCMQILIRSSQSERSTPAKVVPAKPKDNHHPESSSQTETEKEK.

A helical transmembrane segment spans residues 2–22 (VIAAAVIVPLGLLFFISGLAV). Positions 91–96 (HRSDID) match the HXXXXD motif motif. Helical transmembrane passes span 305 to 325 (LAVV…FLHW) and 333 to 353 (KGIT…QILI). The interval 357–389 (QSERSTPAKVVPAKPKDNHHPESSSQTETEKEK) is disordered. Residues 370–389 (KPKDNHHPESSSQTETEKEK) show a composition bias toward basic and acidic residues.

The protein belongs to the 1-acyl-sn-glycerol-3-phosphate acyltransferase family. As to quaternary structure, interacts with GPAT9 and DGAT1. In terms of tissue distribution, present in roots, leaves, stems, floral buds and siliques (at protein level). Widely expressed. In contrast to LPAT1, it is not expressed at higher level in leaves.

The protein resides in the endoplasmic reticulum membrane. It carries out the reaction a 1-acyl-sn-glycero-3-phosphate + an acyl-CoA = a 1,2-diacyl-sn-glycero-3-phosphate + CoA. The protein operates within phospholipid metabolism; CDP-diacylglycerol biosynthesis; CDP-diacylglycerol from sn-glycerol 3-phosphate: step 2/3. Its function is as follows. Converts lysophosphatidic acid (LPA) into phosphatidic acid by incorporating acyl moiety at the 2 position. Has preference for C-18-CoA substrates compared to C-16-CoA substrates. Required for female but not male gametophyte development. In Arabidopsis thaliana (Mouse-ear cress), this protein is 1-acyl-sn-glycerol-3-phosphate acyltransferase 2 (LPAT2).